Here is a 353-residue protein sequence, read N- to C-terminus: Guanine nucleotide-binding protein G(q) subunit alpha (353 aa).

2 S-palmitoyl cysteine lipidation sites follow: Cys-3 and Cys-4. The G-alpha domain maps to 32–353 (RELKLLLLGT…QLNLKEYNLV (322 aa)). The tract at residues 35–48 (KLLLLGTGESGKST) is G1 motif. GTP is bound by residues 40–47 (GTGESGKS), 174–180 (LRVRAPT), 199–203 (DVGGQ), 268–271 (NKKD), and Ala-325. Residues Ser-47 and Thr-180 each coordinate Mg(2+). Residues 172 to 180 (DILRVRAPT) form a G2 motif region. Residues 195–204 (FRMVDVGGQR) are G3 motif. The segment at 264–271 (ILFLNKKD) is G4 motif. The segment at 323 to 328 (TCATDT) is G5 motif.

This sequence belongs to the G-alpha family. G(q) subfamily. As to quaternary structure, g proteins are composed of 3 units; alpha, beta and gamma. The alpha chain contains the guanine nucleotide binding site.

Its function is as follows. Guanine nucleotide-binding proteins (G proteins) are involved as modulators or transducers in various transmembrane signaling systems. In Homarus americanus (American lobster), this protein is Guanine nucleotide-binding protein G(q) subunit alpha.